A 544-amino-acid chain; its full sequence is Intercellular adhesion molecule 3 (544 aa).

The signal sequence occupies residues M1–G31. Residues Q32 to V486 lie on the Extracellular side of the membrane. One can recognise an Ig-like C2-type 1 domain in the interval G48–S105. N-linked (GlcNAc...) asparagine glycans are attached at residues N54, N89, N103, N112, N138, N190, N209, N243, N267, N296, N321, and N326. Intrachain disulfides connect C55-C98 and C59-C102. In terms of domain architecture, Ig-like C2-type 2 spans G134 to R200. Residues C141 and C193 are joined by a disulfide bond. The Ig-like C2-type 3 domain maps to E237 to E302. An intrachain disulfide couples C244 to C295. The 54-residue stretch at G330–H383 folds into the Ig-like C2-type 4 domain. The cysteines at positions 337 and 376 are disulfide-linked. 3 N-linked (GlcNAc...) asparagine glycosylation sites follow: N377, N390, and N456. The Ig-like C2-type 5 domain maps to K417–G470. The cysteines at positions 424 and 463 are disulfide-linked. A helical transmembrane segment spans residues T487–F511. Residues W512–S544 are Cytoplasmic-facing.

It belongs to the immunoglobulin superfamily. ICAM family. As to quaternary structure, interacts with moesin/MSN. In terms of tissue distribution, leukocytes.

It localises to the membrane. In terms of biological role, ICAM proteins are ligands for the leukocyte adhesion protein LFA-1 (integrin alpha-L/beta-2). ICAM3 is also a ligand for integrin alpha-D/beta-2. In association with integrin alpha-L/beta-2, contributes to apoptotic neutrophil phagocytosis by macrophages. The sequence is that of Intercellular adhesion molecule 3 (ICAM3) from Bos taurus (Bovine).